The following is a 237-amino-acid chain: MQKLAELYRGKAKTVYTTENPDLLVLEFRNDTSALDGQRIEQFDRKGMVNNKFNHFIMAKLEEAGIPTQMESLLSDTEVLVKKLEMIPVECVIRNRAAGSLVKRLGIEEGLELNPPLFDLFLKNDAMHDPMVNESYCKTFGWATEAQLARMKELSYLANDVLSKLFDDAGLILVDFKLEFGLFNGEVVLGDEFSPDGSRLWDKKTLNKMDKDRYRQSLGGLIEAYEEVAHRIGVKLD.

It belongs to the SAICAR synthetase family.

It carries out the reaction 5-amino-1-(5-phospho-D-ribosyl)imidazole-4-carboxylate + L-aspartate + ATP = (2S)-2-[5-amino-1-(5-phospho-beta-D-ribosyl)imidazole-4-carboxamido]succinate + ADP + phosphate + 2 H(+). It functions in the pathway purine metabolism; IMP biosynthesis via de novo pathway; 5-amino-1-(5-phospho-D-ribosyl)imidazole-4-carboxamide from 5-amino-1-(5-phospho-D-ribosyl)imidazole-4-carboxylate: step 1/2. The protein is Phosphoribosylaminoimidazole-succinocarboxamide synthase of Yersinia enterocolitica serotype O:8 / biotype 1B (strain NCTC 13174 / 8081).